The primary structure comprises 295 residues: Movement protein BC1 (295 aa).

This sequence belongs to the begomovirus movement protein BC1 family. In terms of assembly, binds to dimeric supercoiled plasmid DNA. In terms of processing, phosphorylated.

The protein localises to the host cell membrane. It localises to the host microsome membrane. It is found in the host endoplasmic reticulum membrane. In terms of biological role, transports viral genome to neighboring plant cells directly through plasmosdesmata, without any budding. The movement protein allows efficient cell to cell propagation, by bypassing the host cell wall barrier. Begomovirus genome is shuttled out of nucleus by Nuclear shuttle protein (NSP) and the movement protein transports the DNA-NSP complex to cell plasmodesmata and facilitates further movement across the cell wall. This is Movement protein BC1 from Brassica oleracea (Wild cabbage).